The sequence spans 378 residues: Putative glutamate--cysteine ligase 2 (378 aa).

The protein belongs to the glutamate--cysteine ligase type 2 family. YbdK subfamily.

It catalyses the reaction L-cysteine + L-glutamate + ATP = gamma-L-glutamyl-L-cysteine + ADP + phosphate + H(+). In terms of biological role, ATP-dependent carboxylate-amine ligase which exhibits weak glutamate--cysteine ligase activity. The polypeptide is Putative glutamate--cysteine ligase 2 (Salinispora tropica (strain ATCC BAA-916 / DSM 44818 / JCM 13857 / NBRC 105044 / CNB-440)).